A 1300-amino-acid polypeptide reads, in one-letter code: Histone-lysine N-methyltransferase Suv4-20 (1300 aa).

Positions 1 to 136 (MVVGSNHTRR…GSGSVVSGLN (136 aa)) are disordered. Residues 14 to 62 (GSRFTNSSSSSSTSGGPTASASSTTSVTSSLATNSTSTSTAAALLSSMS) show a composition bias toward low complexity. A compositionally biased stretch (polar residues) spans 79–97 (QTNQQHHQVAHSQPHATHY). Residues 116–128 (GSGGGSAGSGSGS) show a composition bias toward gly residues. The SET domain maps to 255–366 (EACYRYTLEE…VGEEITCFYG (112 aa)). Disordered stretches follow at residues 432-490 (SRAN…GKEA), 535-574 (QQHHHQHHFHHHHHHHHHHHNHGQHASTGAEATAAVQQMA), 669-744 (HQSQ…SAGR), 756-856 (NNNI…TQGI), and 891-927 (ALGGFPTGSTGSQRKRAQAGEPTTSCSSTTISNVEPL). The segment covering 435-451 (NSTNSTSNSNSNTNDST) has biased composition (low complexity). Residues 452 to 462 (GPSETSSTNGL) show a composition bias toward polar residues. Residues 536-557 (QHHHQHHFHHHHHHHHHHHNHG) show a composition bias toward basic residues. A compositionally biased stretch (low complexity) spans 564–574 (AEATAAVQQMA). Basic and acidic residues-rich tracts occupy residues 677–688 (RRSERQKEKLTD), 698–707 (QQKKEQKQQD), and 722–735 (QPEKSEEKQQEQQK). The segment covering 756–821 (NNNIATTTNS…SSIPSSTSSE (66 aa)) has biased composition (low complexity). Polar residues-rich tracts occupy residues 822–834 (NQQQQATRRSCSP) and 911–923 (EPTTSCSSTTISN). Phosphoserine is present on residues S831 and S833. Position 930 is a phosphothreonine (T930). Disordered stretches follow at residues 956–988 (SLSNGGAGRGAPGSHREGTAGEGSVRSALNLTG), 1006–1188 (EHGN…PNGK), 1212–1233 (SPGQGQAIVSSSSGSSGGGGSG), and 1263–1300 (QISQQKTSSGGGAGVVPTSTSTGAVTSHHHTNNHHGQK). A compositionally biased stretch (acidic residues) spans 1009–1029 (NDDDEDEEEDDEEPAAEEEEE). Over residues 1041–1055 (KKQRKKQRSRSRSSQ) the composition is skewed to basic residues. Composition is skewed to low complexity over residues 1117–1145 (ASSTSLTVNTSSSSTSSSSGVGGATSTSA) and 1161–1178 (SPSSTTSSSFQSACTSTT). The span at 1289–1300 (SHHHTNNHHGQK) shows a compositional bias: basic residues.

Belongs to the class V-like SAM-binding methyltransferase superfamily. Histone-lysine methyltransferase family. Suvar4-20 subfamily.

It is found in the nucleus. The protein localises to the chromosome. It carries out the reaction L-lysyl(20)-[histone H4] + S-adenosyl-L-methionine = N(6)-methyl-L-lysyl(20)-[histone H4] + S-adenosyl-L-homocysteine + H(+). The enzyme catalyses N(6)-methyl-L-lysyl(20)-[histone H4] + S-adenosyl-L-methionine = N(6),N(6)-dimethyl-L-lysyl(20)-[histone H4] + S-adenosyl-L-homocysteine + H(+). It catalyses the reaction N(6),N(6)-dimethyl-L-lysyl(20)-[histone H4] + S-adenosyl-L-methionine = N(6),N(6),N(6)-trimethyl-L-lysyl(20)-[histone H4] + S-adenosyl-L-homocysteine + H(+). Histone methyltransferase that specifically trimethylates 'Lys-20' of histone H4. H4 'Lys-20' trimethylation represents a specific tag for epigenetic transcriptional repression. Mainly functions in pericentric heterochromatin regions, thereby playing a central role in the establishment of constitutive heterochromatin in these regions. Acts as a dominant suppressor of position-effect variegation. The chain is Histone-lysine N-methyltransferase Suv4-20 (Hmt4-20) from Drosophila melanogaster (Fruit fly).